The chain runs to 862 residues: Eukaryotic translation initiation factor 3 subunit C (862 aa).

Residues 1–81 (MSSRFFYGGG…EEEEKVTVVK (81 aa)) are disordered. Over residues 17–54 (SSDEEELYSDREEEEKSEEEESSEEEDETSEEEESDEE) the composition is skewed to acidic residues. The span at 55-65 (TGARKFLKDVA) shows a compositional bias: basic and acidic residues. Positions 66–75 (SDSEEEEEEE) are enriched in acidic residues. The PCI domain occupies 600-774 (FHMHINLELL…NAIVFRKGVE (175 aa)). The segment at 813-862 (RDQGAGARGGRGSGRGGQARGGPRFPGGQQGRRPGGQQFGGGALGGAIKA) is disordered. Residues 818–862 (GARGGRGSGRGGQARGGPRFPGGQQGRRPGGQQFGGGALGGAIKA) are compositionally biased toward gly residues.

This sequence belongs to the eIF-3 subunit C family. As to quaternary structure, component of the eukaryotic translation initiation factor 3 (eIF-3) complex.

Its subcellular location is the cytoplasm. In terms of biological role, component of the eukaryotic translation initiation factor 3 (eIF-3) complex, which is involved in protein synthesis of a specialized repertoire of mRNAs and, together with other initiation factors, stimulates binding of mRNA and methionyl-tRNAi to the 40S ribosome. The eIF-3 complex specifically targets and initiates translation of a subset of mRNAs involved in cell proliferation. The polypeptide is Eukaryotic translation initiation factor 3 subunit C (nip1) (Aspergillus fumigatus (strain CBS 144.89 / FGSC A1163 / CEA10) (Neosartorya fumigata)).